A 666-amino-acid polypeptide reads, in one-letter code: Non-receptor tyrosine-protein kinase TNK1 (666 aa).

Residues S60 and S96 each carry the phosphoserine modification. The 262-residue stretch at 116-377 folds into the Protein kinase domain; it reads VCRGELLGSG…PSFSHLEGLL (262 aa). Residues 122-130 and K148 each bind ATP; that span reads LGSGCFGVV. Residue D245 is the Proton acceptor of the active site. A phosphoserine mark is found at S255 and S411. An SH3 domain is found at 380–445; it reads AGPSEACCVR…PASAVTLADA (66 aa). Residues 446-493 form a disordered region; the sequence is GGLPATRPVHRGTPARGDQHPGSIDGDRKKANLWDAPPARGQRRNMPL. S502 carries the post-translational modification Phosphoserine. The tract at residues 506–579 is disordered; that stretch reads VLSLGPRPTG…MGMPGARKAA (74 aa). At T514 the chain carries Phosphothreonine. At S519 the chain carries Phosphoserine. Pro residues predominate over residues 531-541; that stretch reads QGPPGLPPRPP. Low complexity predominate over residues 542–552; that stretch reads LSSSSPQPSQP. Residue S582 is modified to Phosphoserine.

The protein belongs to the protein kinase superfamily. Tyr protein kinase family. As to quaternary structure, interacts with the SH3 domain of PLCG1 via its Pro-rich domain. Autophosphorylated on tyrosine residues. In terms of tissue distribution, expressed in all umbilical cord blood, bone marrow and adult blood cell sub-populations and in several leukemia cell lines. Highly expressed in fetal blood, brain, lung, liver and kidney. Detected at lower levels in adult prostate, testis, ovary, small intestine and colon. Not expressed in adult lung, liver, kidney or brain.

Its subcellular location is the cytoplasm. It localises to the membrane. It catalyses the reaction L-tyrosyl-[protein] + ATP = O-phospho-L-tyrosyl-[protein] + ADP + H(+). Functionally, involved in negative regulation of cell growth. Has tumor suppressor properties. Plays a negative regulatory role in the Ras-MAPK pathway. May function in signaling pathways utilized broadly during fetal development and more selectively in adult tissues and in cells of the lymphohematopoietic system. Could specifically be involved in phospholipid signal transduction. The chain is Non-receptor tyrosine-protein kinase TNK1 from Homo sapiens (Human).